A 287-amino-acid polypeptide reads, in one-letter code: Thioredoxin-related transmembrane protein 2 (287 aa).

Positions 1–13 (MAVLAPLLAVLYA) are cleaved as a signal peptide. Over 14-112 (APGLLRWVSQ…ILFFRLDLRM (99 aa)) the chain is Extracellular. A helical membrane pass occupies residues 113-133 (GLLYITLCIVFLMTCKPPLYL). The Cytoplasmic portion of the chain corresponds to 134 to 287 (GPEHIKYFSD…NEWNDGKKDQ (154 aa)). Positions 137 to 209 (HIKYFSDKTL…PEVSCRYSIS (73 aa)) constitute a Thioredoxin domain. Residues 284 to 287 (KKDQ) carry the Di-lysine motif motif.

In terms of assembly, monomer. Homodimer; disulfide-linked. Occurs in both reduced and oxidized monomeric form. Oxidative conditions increase homodimerization.

The protein resides in the endoplasmic reticulum membrane. It is found in the mitochondrion membrane. In terms of biological role, endoplasmic reticulum and mitochondria-associated protein that probably functions as a regulator of cellular redox state and thereby regulates protein post-translational modification, protein folding and mitochondrial activity. The chain is Thioredoxin-related transmembrane protein 2 (tmx2) from Xenopus laevis (African clawed frog).